The chain runs to 212 residues: Glycerol-3-phosphate acyltransferase (212 aa).

The next 6 helical transmembrane spans lie at I8–V28, A59–A79, V90–F110, I122–A142, S148–G168, and V169–F189.

This sequence belongs to the PlsY family. Probably interacts with PlsX.

It is found in the cell inner membrane. It catalyses the reaction an acyl phosphate + sn-glycerol 3-phosphate = a 1-acyl-sn-glycero-3-phosphate + phosphate. It functions in the pathway lipid metabolism; phospholipid metabolism. Catalyzes the transfer of an acyl group from acyl-phosphate (acyl-PO(4)) to glycerol-3-phosphate (G3P) to form lysophosphatidic acid (LPA). This enzyme utilizes acyl-phosphate as fatty acyl donor, but not acyl-CoA or acyl-ACP. This is Glycerol-3-phosphate acyltransferase from Bordetella petrii (strain ATCC BAA-461 / DSM 12804 / CCUG 43448).